A 201-amino-acid chain; its full sequence is MYDYIKGIVKTITPEYIVVETGQIGYQIITGNPFSFQRLEGTEAQVFLYQHVREDNISLFGFQSTEERYLFKKLLSVSGIGPKSALAIIASGDVVPLITAIESEDDVYLTKFPSVGKKTARQIILDLKGKLADVVASEIVYKAAENDIVTGLSPQLEEAVLALEALGYSTRELKKVIPKMAKENDLTSDAYIKLALRLMTK.

The interval 1 to 63 (MYDYIKGIVK…EDNISLFGFQ (63 aa)) is domain I. A domain II region spans residues 64-142 (STEERYLFKK…DVVASEIVYK (79 aa)). The interval 143–153 (AAENDIVTGLS) is flexible linker. The interval 153–201 (SPQLEEAVLALEALGYSTRELKKVIPKMAKENDLTSDAYIKLALRLMTK) is domain III.

Belongs to the RuvA family. In terms of assembly, homotetramer. Forms an RuvA(8)-RuvB(12)-Holliday junction (HJ) complex. HJ DNA is sandwiched between 2 RuvA tetramers; dsDNA enters through RuvA and exits via RuvB. An RuvB hexamer assembles on each DNA strand where it exits the tetramer. Each RuvB hexamer is contacted by two RuvA subunits (via domain III) on 2 adjacent RuvB subunits; this complex drives branch migration. In the full resolvosome a probable DNA-RuvA(4)-RuvB(12)-RuvC(2) complex forms which resolves the HJ.

The protein localises to the cytoplasm. Its function is as follows. The RuvA-RuvB-RuvC complex processes Holliday junction (HJ) DNA during genetic recombination and DNA repair, while the RuvA-RuvB complex plays an important role in the rescue of blocked DNA replication forks via replication fork reversal (RFR). RuvA specifically binds to HJ cruciform DNA, conferring on it an open structure. The RuvB hexamer acts as an ATP-dependent pump, pulling dsDNA into and through the RuvAB complex. HJ branch migration allows RuvC to scan DNA until it finds its consensus sequence, where it cleaves and resolves the cruciform DNA. In Listeria innocua serovar 6a (strain ATCC BAA-680 / CLIP 11262), this protein is Holliday junction branch migration complex subunit RuvA.